The sequence spans 440 residues: MENIQKLIARYPLVEDLVALKETTWFNPGATSLAQGLPYVGLTEQDVNAAHDRLARFAPYLAKAFPQTAAAGGMIESDVVAIPAMQKRLEKEYGQTINGEMLLKKDSHLAISGSIKARGGIYEVLTHAEKLALEAGLLTTDDDYSVLLSPEFKQFFSQYSIAVGSTGNLGLSIGIMSACIGFKVTVHMSADARAWKKAKLRSHGVTVVEYEDDYGVAVEQGRKAAQSDPNCFFIDDENSRTLFLGYAVAGQRLKAQFAQQGRVVDASHPLFVYLPCGVGGGPGGVAFGLKLAFGDNVHCFFAEPTHSPCMLLGVYTGLHDAISVQDIGIDNLTAADGLAVGRASGFVGRAMERLLDGLYTLDDQTMYDMLGWLAQEEGIRLEPSALAGMAGPQRICASVAYQQRHGFSQTQLGNATHLVWATGGGMVPEDEMEQYLAKGR.

The residue at position 116 (Lys116) is an N6-(pyridoxal phosphate)lysine.

Belongs to the serine/threonine dehydratase family. DsdA subfamily. As to quaternary structure, monomer. Pyridoxal 5'-phosphate is required as a cofactor.

The enzyme catalyses D-serine = pyruvate + NH4(+). The sequence is that of D-serine dehydratase from Salmonella typhimurium (strain LT2 / SGSC1412 / ATCC 700720).